Consider the following 49-residue polypeptide: Large ribosomal subunit protein bL33 (49 aa).

The protein belongs to the bacterial ribosomal protein bL33 family.

The chain is Large ribosomal subunit protein bL33 from Clostridioides difficile (strain 630) (Peptoclostridium difficile).